Here is a 393-residue protein sequence, read N- to C-terminus: MLITKADPMVVSMGPHHPSMHGVLRLIVTLDGENVADCEPVLGYLHRGMEKIAESRTTLQYLPYVTRWDYLATMFTEAITVNAPERLANIQVPKRASYIRMIMLELSRIASHLLWLGPFMADIGAQTPFFYILREREMIYDLFEAATGMRMMHNYFRIGGVAVDLPYGWVDKCLDFCDYFLPKVNEYERLITRNPIFLKRVEGIGVIGREEAINWGLSGPMLRASGVQWDLRKVDRYECYHELDWQVEWQSGGDCFARYLVRIGEMRESVTIIQQALKAIPGGPYENLEARRMASMAQKNSQWNDFEYQFVSKKPSPTFKLPKQEHYVRVEAPKGELGVFLIGDDSMFPWRWKIRPPGFINLQILPQLLIGMKLADIMTILGSIDIIMGEVDR.

The protein belongs to the complex I 49 kDa subunit family. In terms of assembly, NDH is composed of at least 16 different subunits, 5 of which are encoded in the nucleus.

Its subcellular location is the plastid. The protein resides in the chloroplast thylakoid membrane. The catalysed reaction is a plastoquinone + NADH + (n+1) H(+)(in) = a plastoquinol + NAD(+) + n H(+)(out). The enzyme catalyses a plastoquinone + NADPH + (n+1) H(+)(in) = a plastoquinol + NADP(+) + n H(+)(out). NDH shuttles electrons from NAD(P)H:plastoquinone, via FMN and iron-sulfur (Fe-S) centers, to quinones in the photosynthetic chain and possibly in a chloroplast respiratory chain. The immediate electron acceptor for the enzyme in this species is believed to be plastoquinone. Couples the redox reaction to proton translocation, and thus conserves the redox energy in a proton gradient. This Zygnema circumcarinatum (Green alga) protein is NAD(P)H-quinone oxidoreductase subunit H, chloroplastic.